The chain runs to 380 residues: Cytochrome b (380 aa).

The next 4 membrane-spanning stretches (helical) occupy residues F34–M54, W78–I99, W114–L134, and F179–T199. 2 residues coordinate heme b: H84 and H98. The heme b site is built by H183 and H197. Position 202 (H202) interacts with a ubiquinone. The next 4 membrane-spanning stretches (helical) occupy residues L227–S247, L289–H309, L321–S341, and F348–P368.

This sequence belongs to the cytochrome b family. In terms of assembly, the cytochrome bc1 complex contains 11 subunits: 3 respiratory subunits (MT-CYB, CYC1 and UQCRFS1), 2 core proteins (UQCRC1 and UQCRC2) and 6 low-molecular weight proteins (UQCRH/QCR6, UQCRB/QCR7, UQCRQ/QCR8, UQCR10/QCR9, UQCR11/QCR10 and a cleavage product of UQCRFS1). This cytochrome bc1 complex then forms a dimer. It depends on heme b as a cofactor.

The protein resides in the mitochondrion inner membrane. Functionally, component of the ubiquinol-cytochrome c reductase complex (complex III or cytochrome b-c1 complex) that is part of the mitochondrial respiratory chain. The b-c1 complex mediates electron transfer from ubiquinol to cytochrome c. Contributes to the generation of a proton gradient across the mitochondrial membrane that is then used for ATP synthesis. In Oceanodroma furcata (Fork-tailed storm-petrel), this protein is Cytochrome b (MT-CYB).